A 439-amino-acid polypeptide reads, in one-letter code: Oocyte zinc finger protein XlCOF28 (439 aa).

C2H2-type zinc fingers lie at residues 6–28 (YECT…QRTH), 34–56 (FKCT…KKCH), 62–84 (YMCT…IRTH), 90–112 (FTCT…LRIH), 118–140 (HKCN…QRTH), 146–168 (FQCT…LRIH), 174–196 (YKCS…QRTH), 202–224 (FQCS…ERTH), and 230–252 (YKCS…QKTH). 2 disordered regions span residues 246–275 (KLHQ…APKT) and 285–304 (AGLE…ESPE). 4 consecutive C2H2-type zinc fingers follow at residues 333–355 (HKCT…QRTH), 361–383 (FKCS…RKIH), 389–411 (YTCA…RRTH), and 417–439 (YICA…QRIH).

Belongs to the krueppel C2H2-type zinc-finger protein family.

It is found in the nucleus. May be involved in transcriptional regulation. This chain is Oocyte zinc finger protein XlCOF28, found in Xenopus laevis (African clawed frog).